The chain runs to 473 residues: Cytochrome c-552 (473 aa).

A signal peptide spans 1 to 33; sequence MQHGDEMMKKMTGKSFALSALVAASFMAAGAMA. His93 is a heme c binding site. Residues Cys121, Cys124, and Lys125 each contribute to the heme site. Cys159, Cys162, His163, Cys201, Cys204, and His205 together coordinate heme c. The Ca(2+) site is built by Glu207, Tyr208, Lys256, and Gln258. A substrate-binding site is contributed by Tyr208. A substrate-binding site is contributed by His259. Residues His270, Cys277, Cys280, His281, His296, Cys309, Cys312, His313, and His388 each contribute to the heme c site.

Belongs to the cytochrome c-552 family. It depends on Ca(2+) as a cofactor. Heme c serves as cofactor.

The protein resides in the periplasm. It catalyses the reaction 6 Fe(III)-[cytochrome c] + NH4(+) + 2 H2O = 6 Fe(II)-[cytochrome c] + nitrite + 8 H(+). Its pathway is nitrogen metabolism; nitrate reduction (assimilation). Its function is as follows. Catalyzes the reduction of nitrite to ammonia, consuming six electrons in the process. The polypeptide is Cytochrome c-552 (Shewanella sp. (strain ANA-3)).